Here is a 305-residue protein sequence, read N- to C-terminus: MKSNIDKQAVKNFLLQLQDQICQQLEAADGQAQFIEDAWQREPGEKLGGGGRTRVMRDGAVFEQGGVNFSHVFGEQMPGSATAHRPELAGRRFEAMGVSLVMHPKNPYVPTSHANVRYFIAEKEGEDPIWWFGGGFDLTPFYPFVEDCQLWHQTAKNLCAPFGAEIYNEHKAWCDRYFYLPHRNETRGIGGLFFDDLNEWPFEQCFAYMQAVGEGYTQAYVPIVEKRKNTPFTERERQFQLYRRGRYVEFNLVLDRGTLFGLQTGGRTESILMSMPPLARWEYAYQPESGTPEAQLSEFLVPREW.

Serine 99 lines the substrate pocket. A divalent metal cation is bound by residues histidine 103 and histidine 113. Histidine 113 acts as the Proton donor in catalysis. Position 115–117 (115–117 (NVR)) interacts with substrate. A divalent metal cation is bound by residues histidine 152 and histidine 182. Positions 247–282 (YVEFNLVLDRGTLFGLQTGGRTESILMSMPPLARWE) are important for dimerization. 265 to 267 (GGR) serves as a coordination point for substrate.

It belongs to the aerobic coproporphyrinogen-III oxidase family. Homodimer. The cofactor is a divalent metal cation.

The protein resides in the cytoplasm. It catalyses the reaction coproporphyrinogen III + O2 + 2 H(+) = protoporphyrinogen IX + 2 CO2 + 2 H2O. It functions in the pathway porphyrin-containing compound metabolism; protoporphyrin-IX biosynthesis; protoporphyrinogen-IX from coproporphyrinogen-III (O2 route): step 1/1. Involved in the heme biosynthesis. Catalyzes the aerobic oxidative decarboxylation of propionate groups of rings A and B of coproporphyrinogen-III to yield the vinyl groups in protoporphyrinogen-IX. In Vibrio cholerae serotype O1 (strain M66-2), this protein is Oxygen-dependent coproporphyrinogen-III oxidase.